The chain runs to 1229 residues: Pesticidal crystal protein Cry1Bb (1229 aa).

It belongs to the delta endotoxin family.

Its function is as follows. Promotes colloidosmotic lysis by binding to the midgut epithelial cells of many lepidopteran larvae. This Bacillus thuringiensis protein is Pesticidal crystal protein Cry1Bb (cry1Bb).